Reading from the N-terminus, the 609-residue chain is UvrABC system protein C (609 aa).

One can recognise a GIY-YIG domain in the interval 13-91; the sequence is HEPGVYRMYD…IKLYQPRYNV (79 aa). Positions 201–236 constitute a UVR domain; it reads QQVLDYLIGKMEQASRNLDFEQAARYRDQIQAVRSV.

It belongs to the UvrC family. Interacts with UvrB in an incision complex.

Its subcellular location is the cytoplasm. The UvrABC repair system catalyzes the recognition and processing of DNA lesions. UvrC both incises the 5' and 3' sides of the lesion. The N-terminal half is responsible for the 3' incision and the C-terminal half is responsible for the 5' incision. This Haemophilus influenzae (strain 86-028NP) protein is UvrABC system protein C.